The primary structure comprises 180 residues: GTP cyclohydrolase 1 (180 aa).

Residues C71, H74, and C142 each contribute to the Zn(2+) site.

This sequence belongs to the GTP cyclohydrolase I family. In terms of assembly, toroid-shaped homodecamer, composed of two pentamers of five dimers.

The catalysed reaction is GTP + H2O = 7,8-dihydroneopterin 3'-triphosphate + formate + H(+). Its pathway is cofactor biosynthesis; 7,8-dihydroneopterin triphosphate biosynthesis; 7,8-dihydroneopterin triphosphate from GTP: step 1/1. In Helicobacter pylori (strain ATCC 700392 / 26695) (Campylobacter pylori), this protein is GTP cyclohydrolase 1 (folE).